We begin with the raw amino-acid sequence, 250 residues long: ATP synthase subunit a (250 aa).

Transmembrane regions (helical) follow at residues 26–46 (FTNASLFMVATVGAAAGFLYL), 84–104 (FFPMVFSLFMFILTANLLGMV), 114–134 (IIVTFALAVFVIGTVILYGFY), 143–163 (LFVPHGVPGALLPLVVAIEII), 193–213 (FVASLSAFGALGIGGAILPLI), and 216–236 (VALTGLEFLVAFLQAYVFAVL).

It belongs to the ATPase A chain family. F-type ATPases have 2 components, CF(1) - the catalytic core - and CF(0) - the membrane proton channel. CF(1) has five subunits: alpha(3), beta(3), gamma(1), delta(1), epsilon(1). CF(0) has three main subunits: a(1), b(2) and c(9-12). The alpha and beta chains form an alternating ring which encloses part of the gamma chain. CF(1) is attached to CF(0) by a central stalk formed by the gamma and epsilon chains, while a peripheral stalk is formed by the delta and b chains.

It localises to the cell inner membrane. In terms of biological role, key component of the proton channel; it plays a direct role in the translocation of protons across the membrane. In Sinorhizobium medicae (strain WSM419) (Ensifer medicae), this protein is ATP synthase subunit a.